A 417-amino-acid chain; its full sequence is Argininosuccinate synthase (417 aa).

9–17 (AYSGGLDTS) provides a ligand contact to ATP. Tyr-87 lines the L-citrulline pocket. ATP is bound at residue Gly-117. L-aspartate-binding residues include Thr-119, Asn-123, and Asp-124. Asn-123 contributes to the L-citrulline binding site. Arg-127, Ser-175, Ser-184, Glu-260, and Tyr-272 together coordinate L-citrulline.

Belongs to the argininosuccinate synthase family. Type 1 subfamily. In terms of assembly, homotetramer.

The protein resides in the cytoplasm. The catalysed reaction is L-citrulline + L-aspartate + ATP = 2-(N(omega)-L-arginino)succinate + AMP + diphosphate + H(+). It functions in the pathway amino-acid biosynthesis; L-arginine biosynthesis; L-arginine from L-ornithine and carbamoyl phosphate: step 2/3. In Oceanobacillus iheyensis (strain DSM 14371 / CIP 107618 / JCM 11309 / KCTC 3954 / HTE831), this protein is Argininosuccinate synthase.